The primary structure comprises 100 residues: MAKQNMIEREKKRNKLIQKYYRKRKEIKGTLNNNLTFIEQLEIQRELQKLPKNSTPCRRRNRCWKTGRSRGFYKDFGLSRHVLREMSHNCLLPGVRKASW.

Belongs to the universal ribosomal protein uS14 family. Part of the 30S ribosomal subunit.

It is found in the plastid. Its subcellular location is the chloroplast. In terms of biological role, binds 16S rRNA, required for the assembly of 30S particles. This is Small ribosomal subunit protein uS14c from Gracilaria tenuistipitata var. liui (Red alga).